The primary structure comprises 190 residues: Superoxide dismutase [Fe] (190 aa).

His-27, His-75, Asp-156, and His-160 together coordinate Fe cation.

This sequence belongs to the iron/manganese superoxide dismutase family. As to quaternary structure, homodimer. It depends on Fe cation as a cofactor.

The catalysed reaction is 2 superoxide + 2 H(+) = H2O2 + O2. Destroys superoxide anion radicals which are normally produced within the cells and which are toxic to biological systems. In Entamoeba histolytica (strain ATCC 30459 / HM-1:IMSS / ABRM), this protein is Superoxide dismutase [Fe] (SODB).